The primary structure comprises 1442 residues: DNA polymerase III PolC-type (1442 aa).

In terms of domain architecture, Exonuclease spans 426–582; sequence YVVFDVETTG…YDTEATAYIF (157 aa).

Belongs to the DNA polymerase type-C family. PolC subfamily.

The protein localises to the cytoplasm. It carries out the reaction DNA(n) + a 2'-deoxyribonucleoside 5'-triphosphate = DNA(n+1) + diphosphate. In terms of biological role, required for replicative DNA synthesis. This DNA polymerase also exhibits 3' to 5' exonuclease activity. The protein is DNA polymerase III PolC-type of Staphylococcus epidermidis (strain ATCC 12228 / FDA PCI 1200).